A 170-amino-acid polypeptide reads, in one-letter code: MVNPIATLLLECGAIEFGEFVLASGARSSYYIDIKAATTNPAVLTEIGKTIAEGREFEMVAGVAVGAVPIAVAVSLASGRPYAVVRKEGKDHGKAGTIIGDVLGKNVLLVEDVTTSGGSALYGLEALRAAGAHVDQVVTVVDREAGAREALAEKGASLLALVRVSELLDG.

5-phospho-alpha-D-ribose 1-diphosphate contacts are provided by residues R86, K87, K90, H92, and 111–119 (EDVTTSGGS). Residues T115 and R143 each coordinate orotate.

It belongs to the purine/pyrimidine phosphoribosyltransferase family. PyrE subfamily. As to quaternary structure, homodimer. Requires Mg(2+) as cofactor.

The enzyme catalyses orotidine 5'-phosphate + diphosphate = orotate + 5-phospho-alpha-D-ribose 1-diphosphate. The protein operates within pyrimidine metabolism; UMP biosynthesis via de novo pathway; UMP from orotate: step 1/2. Catalyzes the transfer of a ribosyl phosphate group from 5-phosphoribose 1-diphosphate to orotate, leading to the formation of orotidine monophosphate (OMP). The protein is Orotate phosphoribosyltransferase of Methanoculleus marisnigri (strain ATCC 35101 / DSM 1498 / JR1).